The sequence spans 493 residues: Glutamyl-tRNA(Gln) amidotransferase subunit A (493 aa).

Catalysis depends on charge relay system residues lysine 78 and serine 158. Serine 182 serves as the catalytic Acyl-ester intermediate.

Belongs to the amidase family. GatA subfamily. Heterotrimer of A, B and C subunits.

The enzyme catalyses L-glutamyl-tRNA(Gln) + L-glutamine + ATP + H2O = L-glutaminyl-tRNA(Gln) + L-glutamate + ADP + phosphate + H(+). Allows the formation of correctly charged Gln-tRNA(Gln) through the transamidation of misacylated Glu-tRNA(Gln) in organisms which lack glutaminyl-tRNA synthetase. The reaction takes place in the presence of glutamine and ATP through an activated gamma-phospho-Glu-tRNA(Gln). This chain is Glutamyl-tRNA(Gln) amidotransferase subunit A, found in Methylorubrum extorquens (strain PA1) (Methylobacterium extorquens).